Here is a 421-residue protein sequence, read N- to C-terminus: 4-hydroxy-3-methylbut-2-en-1-yl diphosphate synthase (flavodoxin) (421 aa).

The [4Fe-4S] cluster site is built by Cys311, Cys314, Cys357, and Glu364.

It belongs to the IspG family. [4Fe-4S] cluster is required as a cofactor.

The catalysed reaction is (2E)-4-hydroxy-3-methylbut-2-enyl diphosphate + oxidized [flavodoxin] + H2O + 2 H(+) = 2-C-methyl-D-erythritol 2,4-cyclic diphosphate + reduced [flavodoxin]. It functions in the pathway isoprenoid biosynthesis; isopentenyl diphosphate biosynthesis via DXP pathway; isopentenyl diphosphate from 1-deoxy-D-xylulose 5-phosphate: step 5/6. Its function is as follows. Converts 2C-methyl-D-erythritol 2,4-cyclodiphosphate (ME-2,4cPP) into 1-hydroxy-2-methyl-2-(E)-butenyl 4-diphosphate. The sequence is that of 4-hydroxy-3-methylbut-2-en-1-yl diphosphate synthase (flavodoxin) from Xanthomonas oryzae pv. oryzae (strain MAFF 311018).